Consider the following 341-residue polypeptide: UDP-N-acetyl-alpha-D-glucosaminouronate 4-epimerase (341 aa).

Phe27, Ile28, Asp47, Ala50, Thr51, Gly52, Asp78, Ile79, and Gln98 together coordinate NAD(+). Ser103 is a UDP-N-acetyl-alpha-D-galactosamine binding site. NAD(+) is bound at residue Thr117. UDP-N-acetyl-alpha-D-galactosamine contacts are provided by Ser142, Ser143, and Tyr166. NAD(+) contacts are provided by Tyr166 and Lys170. The active-site Proton acceptor is Tyr166. Asn195 contacts UDP-N-acetyl-alpha-D-galactosamine. Val196 lines the NAD(+) pocket. The UDP-N-acetyl-alpha-D-galactosamine site is built by Val210, Tyr225, Asn227, Arg234, Arg299, and Asp302.

The protein belongs to the NAD(P)-dependent epimerase/dehydratase family. Homodimer. The cofactor is NAD(+).

It catalyses the reaction UDP-2-acetamido-2-deoxy-alpha-D-glucuronate = UDP-2-acetamido-2-deoxy-alpha-D-galacturonate. The catalysed reaction is UDP-N-acetyl-alpha-D-glucosamine = UDP-N-acetyl-alpha-D-galactosamine. It participates in bacterial outer membrane biogenesis; LPS O-antigen biosynthesis. Its function is as follows. Epimerase required for the biosynthesis of the B-band O antigen of serotype O6 lipopolysaccharide. Catalyzes the reversible epimerization of UDP-N-acetylglucosaminuronic acid (UDP-GlcNAcA) to UDP-N-acetylgalactosaminuronic acid (UDP-GalNAcA). Also catalyzes the reversible epimerization of UDP-N-acetylglucosamine (UDP-GlcNAc) to UDP-N-acetylgalactosamine (UDP-GalNAc). Has very low epimerase activity with UDP-glucose (UDP-Glc) and UDP-galactose (UDP-Gal). In Pseudomonas aeruginosa, this protein is UDP-N-acetyl-alpha-D-glucosaminouronate 4-epimerase.